The primary structure comprises 190 residues: GTP cyclohydrolase 1 (190 aa).

Residues cysteine 78, histidine 81, and cysteine 150 each contribute to the Zn(2+) site.

This sequence belongs to the GTP cyclohydrolase I family. In terms of assembly, toroid-shaped homodecamer, composed of two pentamers of five dimers.

The enzyme catalyses GTP + H2O = 7,8-dihydroneopterin 3'-triphosphate + formate + H(+). It functions in the pathway cofactor biosynthesis; 7,8-dihydroneopterin triphosphate biosynthesis; 7,8-dihydroneopterin triphosphate from GTP: step 1/1. K(+) ions moderately increases the Vmax, whereas UTP and Ca(2+) and Mg(2+) ions drastically increase the Km for GTP. This chain is GTP cyclohydrolase 1 (folE), found in Bacillus subtilis (strain 168).